Reading from the N-terminus, the 279-residue chain is uncharacterized protein (279 aa).

This sequence belongs to the peptidase C59 family.

This is an uncharacterized protein from Chlorella (PBCV-1).